We begin with the raw amino-acid sequence, 1316 residues long: DNA-directed RNA polymerase subunit beta' (1316 aa).

Zn(2+)-binding residues include Cys-60, Cys-62, Cys-75, and Cys-78. Residues Asp-535, Asp-537, and Asp-539 each contribute to the Mg(2+) site. 4 residues coordinate Zn(2+): Cys-891, Cys-968, Cys-975, and Cys-978.

It belongs to the RNA polymerase beta' chain family. The RNAP catalytic core consists of 2 alpha, 1 beta, 1 beta' and 1 omega subunit. When a sigma factor is associated with the core the holoenzyme is formed, which can initiate transcription. Mg(2+) is required as a cofactor. Requires Zn(2+) as cofactor.

The catalysed reaction is RNA(n) + a ribonucleoside 5'-triphosphate = RNA(n+1) + diphosphate. In terms of biological role, DNA-dependent RNA polymerase catalyzes the transcription of DNA into RNA using the four ribonucleoside triphosphates as substrates. The chain is DNA-directed RNA polymerase subunit beta' from Mycobacterium bovis (strain BCG / Tokyo 172 / ATCC 35737 / TMC 1019).